The primary structure comprises 315 residues: Methionyl-tRNA formyltransferase (315 aa).

114-117 (SLLP) provides a ligand contact to (6S)-5,6,7,8-tetrahydrofolate.

This sequence belongs to the Fmt family.

It carries out the reaction L-methionyl-tRNA(fMet) + (6R)-10-formyltetrahydrofolate = N-formyl-L-methionyl-tRNA(fMet) + (6S)-5,6,7,8-tetrahydrofolate + H(+). Functionally, attaches a formyl group to the free amino group of methionyl-tRNA(fMet). The formyl group appears to play a dual role in the initiator identity of N-formylmethionyl-tRNA by promoting its recognition by IF2 and preventing the misappropriation of this tRNA by the elongation apparatus. The sequence is that of Methionyl-tRNA formyltransferase from Corynebacterium efficiens (strain DSM 44549 / YS-314 / AJ 12310 / JCM 11189 / NBRC 100395).